A 424-amino-acid chain; its full sequence is UDP-N-acetylglucosamine 1-carboxyvinyltransferase (424 aa).

22-23 (KN) is a binding site for phosphoenolpyruvate. UDP-N-acetyl-alpha-D-glucosamine is bound at residue Arg-93. Cys-117 functions as the Proton donor in the catalytic mechanism. The residue at position 117 (Cys-117) is a 2-(S-cysteinyl)pyruvic acid O-phosphothioketal. UDP-N-acetyl-alpha-D-glucosamine is bound by residues 122-126 (RPVDL), 164-166 (SVG), Asp-307, and Ile-329.

Belongs to the EPSP synthase family. MurA subfamily.

Its subcellular location is the cytoplasm. The enzyme catalyses phosphoenolpyruvate + UDP-N-acetyl-alpha-D-glucosamine = UDP-N-acetyl-3-O-(1-carboxyvinyl)-alpha-D-glucosamine + phosphate. It functions in the pathway cell wall biogenesis; peptidoglycan biosynthesis. Its function is as follows. Cell wall formation. Adds enolpyruvyl to UDP-N-acetylglucosamine. The chain is UDP-N-acetylglucosamine 1-carboxyvinyltransferase from Haemophilus influenzae (strain ATCC 51907 / DSM 11121 / KW20 / Rd).